The chain runs to 292 residues: Mycothiol acetyltransferase (292 aa).

2 consecutive N-acetyltransferase domains span residues 2-138 and 141-292; these read AEVV…PSAP and VTVR…YAHS. Position 33 (glutamate 33) interacts with 1D-myo-inositol 2-(L-cysteinylamino)-2-deoxy-alpha-D-glucopyranoside. Position 68-70 (68-70) interacts with acetyl-CoA; it reads AVV. Positions 168, 215, and 225 each coordinate 1D-myo-inositol 2-(L-cysteinylamino)-2-deoxy-alpha-D-glucopyranoside. Acetyl-CoA is bound by residues 229-231 and 236-242; these read VAV and QGRGLGR. Tyrosine 263 contributes to the 1D-myo-inositol 2-(L-cysteinylamino)-2-deoxy-alpha-D-glucopyranoside binding site. 268-273 contributes to the acetyl-CoA binding site; that stretch reads NAAALH.

Belongs to the acetyltransferase family. MshD subfamily. In terms of assembly, monomer.

It catalyses the reaction 1D-myo-inositol 2-(L-cysteinylamino)-2-deoxy-alpha-D-glucopyranoside + acetyl-CoA = mycothiol + CoA + H(+). In terms of biological role, catalyzes the transfer of acetyl from acetyl-CoA to desacetylmycothiol (Cys-GlcN-Ins) to form mycothiol. This Tsukamurella paurometabola (strain ATCC 8368 / DSM 20162 / CCUG 35730 / CIP 100753 / JCM 10117 / KCTC 9821 / NBRC 16120 / NCIMB 702349 / NCTC 13040) (Corynebacterium paurometabolum) protein is Mycothiol acetyltransferase.